Here is a 351-residue protein sequence, read N- to C-terminus: Meiotically up-regulated gene 1 protein (351 aa).

It is found in the cytoplasm. Required for correct meiotic chromosome segregation. The chain is Meiotically up-regulated gene 1 protein (mug1) from Schizosaccharomyces pombe (strain 972 / ATCC 24843) (Fission yeast).